A 504-amino-acid polypeptide reads, in one-letter code: Maturase K (504 aa).

This sequence belongs to the intron maturase 2 family. MatK subfamily.

Its subcellular location is the plastid. The protein resides in the chloroplast. In terms of biological role, usually encoded in the trnK tRNA gene intron. Probably assists in splicing its own and other chloroplast group II introns. The sequence is that of Maturase K from Quercus petraea (Durmast oak).